A 467-amino-acid chain; its full sequence is MSTQSVIAVKQFSGPDKIAQAYTVPQPSAHVLSNANYDYDLCGSTNSTSLSCAIQSSNIKTESISSSSLPKILPFSTDSNGESSLSRMSQAEFSDPILSSSSTFCTSLYTSSPMNSGSCRKTGYLPFLPQPPKCEQQQNSAGQSSSSLMLLDADLRNSGHADDEHTDDLKDFLNLSSDCSFHGKCSAMAYNEQMEFQFLSEQLGIAISNNEESPRLDDIYDRPPQLMSLPVSSCSDQEDLQDARSPAKVQLSSSRSSSGTASCNKPRLRWTPELHERFVDAVNKLEGPEKATPKGVLKLMKVEGLTIYHIKSHLQKYRLAKYLPETKEDKKQEEKKTKSVANGNDHAKKKSAQMAEALRMQMEVQKQLHEQLEVQRQLQLRIEEHARYLQKILEEQQKARESISSMTSTTEGESPEFAPMEKTEDKAETSSAPLSKCRITDTDAECHSKVDNKKTKPQADLEMVHDE.

Positions 227 to 266 (MSLPVSSCSDQEDLQDARSPAKVQLSSSRSSSGTASCNKP) are disordered. The HTH myb-type domain maps to 262–322 (SCNKPRLRWT…HLQKYRLAKY (61 aa)). The H-T-H motif DNA-binding region spans 293–318 (PKGVLKLMKVEGLTIYHIKSHLQKYR). The span at 327–337 (KEDKKQEEKKT) shows a compositional bias: basic and acidic residues. 2 disordered regions span residues 327-353 (KEDKKQEEKKTKSVANGNDHAKKKSAQ) and 400-467 (RESI…VHDE). Over residues 402–412 (SISSMTSTTEG) the composition is skewed to polar residues. Composition is skewed to basic and acidic residues over residues 419 to 428 (PMEKTEDKAE) and 438 to 467 (RITDTDAECHSKVDNKKTKPQADLEMVHDE).

As to expression, expressed in the root cap and in the exodermis of the root, in the root tip of lateral roots, in the mesophyll cells of the leaf, in pollen, vascular cylinder of the anther and the veins of the lemma, palea and pistils, and in the xylem and phloem regions of large vascular bundles, small vascular bundles and diffuse vascular bundles in node I.

Its subcellular location is the nucleus. Its function is as follows. Transcription factor involved in phosphate starvation signaling. Binds to P1BS, an imperfect palindromic sequence 5'-GNATATNC-3', to promote the expression of inorganic phosphate (Pi) starvation-responsive genes. Functionally redundant with PHR1 and PHR2 in regulating Pi starvation response and Pi homeostasis. This is Protein PHOSPHATE STARVATION RESPONSE 3 from Oryza sativa subsp. japonica (Rice).